The following is a 161-amino-acid chain: 2-C-methyl-D-erythritol 2,4-cyclodiphosphate synthase (161 aa).

2 residues coordinate a divalent metal cation: aspartate 11 and histidine 13. 4-CDP-2-C-methyl-D-erythritol 2-phosphate is bound by residues 11 to 13 (DIH) and 37 to 38 (HS). Residue histidine 45 participates in a divalent metal cation binding. 4-CDP-2-C-methyl-D-erythritol 2-phosphate is bound by residues 59 to 61 (DIG), 135 to 138 (TTNE), and arginine 145.

It belongs to the IspF family. As to quaternary structure, homotrimer. A divalent metal cation is required as a cofactor.

It carries out the reaction 4-CDP-2-C-methyl-D-erythritol 2-phosphate = 2-C-methyl-D-erythritol 2,4-cyclic diphosphate + CMP. The protein operates within isoprenoid biosynthesis; isopentenyl diphosphate biosynthesis via DXP pathway; isopentenyl diphosphate from 1-deoxy-D-xylulose 5-phosphate: step 4/6. In terms of biological role, involved in the biosynthesis of isopentenyl diphosphate (IPP) and dimethylallyl diphosphate (DMAPP), two major building blocks of isoprenoid compounds. Catalyzes the conversion of 4-diphosphocytidyl-2-C-methyl-D-erythritol 2-phosphate (CDP-ME2P) to 2-C-methyl-D-erythritol 2,4-cyclodiphosphate (ME-CPP) with a corresponding release of cytidine 5-monophosphate (CMP). In Cyanothece sp. (strain PCC 7425 / ATCC 29141), this protein is 2-C-methyl-D-erythritol 2,4-cyclodiphosphate synthase.